Reading from the N-terminus, the 240-residue chain is Regulatory protein RecX (240 aa).

The protein belongs to the RecX family.

It is found in the cytoplasm. In terms of biological role, modulates RecA activity. In Lacticaseibacillus paracasei (strain ATCC 334 / BCRC 17002 / CCUG 31169 / CIP 107868 / KCTC 3260 / NRRL B-441) (Lactobacillus paracasei), this protein is Regulatory protein RecX.